The sequence spans 153 residues: Cytochrome c-type biogenesis protein CcmE (153 aa).

Residues 1 to 8 lie on the Cytoplasmic side of the membrane; it reads MMTPRQRR. Residues 9-29 form a helical; Signal-anchor for type II membrane protein membrane-spanning segment; that stretch reads MTWVALMVAGVSLAAFFALTA. Residues 30–153 lie on the Periplasmic side of the membrane; it reads FQKNLLYFYT…PADYSEYRKK (124 aa). Histidine 124 and tyrosine 128 together coordinate heme. The disordered stretch occupies residues 134-153; it reads AESLKKNGGLPADYSEYRKK.

This sequence belongs to the CcmE/CycJ family.

The protein resides in the cell inner membrane. Heme chaperone required for the biogenesis of c-type cytochromes. Transiently binds heme delivered by CcmC and transfers the heme to apo-cytochromes in a process facilitated by CcmF and CcmH. The chain is Cytochrome c-type biogenesis protein CcmE from Methylococcus capsulatus (strain ATCC 33009 / NCIMB 11132 / Bath).